Here is a 1026-residue protein sequence, read N- to C-terminus: Multidrug resistance protein MdtC (1026 aa).

11 consecutive transmembrane segments (helical) span residues 15-35 (ILIA…LPVA), 333-353 (EVEE…FLFL), 360-380 (LIPA…MYLC), 387-407 (LSLM…IVVL), 431-451 (VGFT…PLLL), 463-483 (FAVT…TLTP), 528-548 (LVGV…IAIP), 853-873 (LILI…LYES), 897-917 (LFNA…IGIV), 953-973 (PIMM…LSGG), and 984-1004 (ITIV…TPVV).

Belongs to the resistance-nodulation-cell division (RND) (TC 2.A.6) family. MdtC subfamily. As to quaternary structure, part of a tripartite efflux system composed of MdtA, MdtB and MdtC. MdtC forms a heteromultimer with MdtB.

The protein resides in the cell inner membrane. The sequence is that of Multidrug resistance protein MdtC from Salmonella schwarzengrund (strain CVM19633).